A 458-amino-acid polypeptide reads, in one-letter code: V-type ATP synthase beta chain (458 aa).

The protein belongs to the ATPase alpha/beta chains family.

Its function is as follows. Produces ATP from ADP in the presence of a proton gradient across the membrane. The V-type beta chain is a regulatory subunit. In Enterococcus faecalis (strain ATCC 700802 / V583), this protein is V-type ATP synthase beta chain.